The primary structure comprises 85 residues: Large ribosomal subunit protein bL27 (85 aa).

The protein belongs to the bacterial ribosomal protein bL27 family.

The polypeptide is Large ribosomal subunit protein bL27 (Mycobacteroides abscessus (strain ATCC 19977 / DSM 44196 / CCUG 20993 / CIP 104536 / JCM 13569 / NCTC 13031 / TMC 1543 / L948) (Mycobacterium abscessus)).